The primary structure comprises 257 residues: Enterotoxin type A (257 aa).

Residues Met1–Lys27 form the signal peptide. A disulfide bridge connects residues Cys120 and Cys130. Positions 211, 249, and 251 each coordinate Zn(2+).

The protein belongs to the staphylococcal/streptococcal toxin family. In terms of assembly, monomer. Interacts with MHC class II molecules alpha/HLA-DRB1 and beta/HLA-DRA chains. The interaction with MHC-II molecules occurs at both zinc-dependent and zinc-independent sites. Interacts with T-cell receptor beta variable 7-9/TRBV7-9. Zn(2+) is required as a cofactor.

Its subcellular location is the secreted. Staphylococcal enterotoxin that activates the host immune system by binding as unprocessed molecules to major histocompatibility (MHC) complex class II and T-cell receptor (TCR) molecules. In turn, waves of cellular activation, cytokine production, and migration into the lung tissue and airways occur via alphabeta T-cells. Also causes the intoxication staphylococcal food poisoning syndrome. The illness is characterized by high fever, hypotension, diarrhea, shock, and in some cases death. The sequence is that of Enterotoxin type A (sea) from Staphylococcus aureus (strain Newman).